Here is a 185-residue protein sequence, read N- to C-terminus: Peptide deformylase (185 aa).

Cys109 and His152 together coordinate Fe cation. The active site involves Glu153. His156 contributes to the Fe cation binding site.

Belongs to the polypeptide deformylase family. Fe(2+) serves as cofactor.

It catalyses the reaction N-terminal N-formyl-L-methionyl-[peptide] + H2O = N-terminal L-methionyl-[peptide] + formate. Its function is as follows. Removes the formyl group from the N-terminal Met of newly synthesized proteins. Requires at least a dipeptide for an efficient rate of reaction. N-terminal L-methionine is a prerequisite for activity but the enzyme has broad specificity at other positions. The sequence is that of Peptide deformylase from Roseiflexus sp. (strain RS-1).